The sequence spans 74 residues: uncharacterized protein (74 aa).

Positions 55 to 74 are disordered; that stretch reads DENSESESKDGASWFKVYRG.

This is an uncharacterized protein from Listeria innocua serovar 6a (strain ATCC BAA-680 / CLIP 11262).